The following is a 465-amino-acid chain: Cysteine--tRNA ligase (465 aa).

Zn(2+) is bound at residue Cys-27. The 'HIGH' region motif lies at 29–39 (PTVYNFFHIGN). Zn(2+) contacts are provided by Cys-207, His-232, and Glu-236. Residues 264-268 (KMSKS) carry the 'KMSKS' region motif. Lys-267 lines the ATP pocket.

The protein belongs to the class-I aminoacyl-tRNA synthetase family. In terms of assembly, monomer. Zn(2+) is required as a cofactor.

The protein localises to the cytoplasm. The enzyme catalyses tRNA(Cys) + L-cysteine + ATP = L-cysteinyl-tRNA(Cys) + AMP + diphosphate. In Clostridium botulinum (strain 657 / Type Ba4), this protein is Cysteine--tRNA ligase.